A 257-amino-acid chain; its full sequence is 5-keto-4-deoxy-D-glucarate aldolase (257 aa).

Residue His-51 is the Proton acceptor of the active site. Gln-152 serves as a coordination point for substrate. Residue Glu-154 coordinates Mg(2+). Positions 179 and 180 each coordinate substrate. A Mg(2+)-binding site is contributed by Asp-180.

The protein belongs to the HpcH/HpaI aldolase family. KDGluc aldolase subfamily. In terms of assembly, homohexamer; trimer of dimers. Mg(2+) serves as cofactor.

The enzyme catalyses 5-dehydro-4-deoxy-D-glucarate = 2-hydroxy-3-oxopropanoate + pyruvate. The catalysed reaction is 2-dehydro-3-deoxy-D-glucarate = 2-hydroxy-3-oxopropanoate + pyruvate. Its pathway is carbohydrate acid metabolism; galactarate degradation; D-glycerate from galactarate: step 2/3. Functionally, catalyzes the reversible retro-aldol cleavage of both 5-keto-4-deoxy-D-glucarate and 2-keto-3-deoxy-D-glucarate to pyruvate and tartronic semialdehyde. In Shigella boydii serotype 18 (strain CDC 3083-94 / BS512), this protein is 5-keto-4-deoxy-D-glucarate aldolase.